We begin with the raw amino-acid sequence, 1165 residues long: Sperm-associated antigen 5 (1165 aa).

The interval 1 to 23 (MWRVKTLNLGLSPSPQKGKPAMS) is disordered. A phosphoserine mark is found at S12, S14, S66, S161, S321, S333, and S342. Residues 431 to 457 (TVPHREARDSSTQTDSSPCGVTKTPKH) form a disordered region. Positions 440 to 449 (SSTQTDSSPC) are enriched in polar residues. The interaction with KNSTRN stretch occupies residues 453 to 821 (KTPKHLQDSK…LRDTVDSLRA (369 aa)). Residues 509–856 (RSKTLVSSCS…LLAEQLQSLT (348 aa)) are a coiled coil. Residues 875 to 907 (PSTGSAPAQEHPLSNDSSISEQTPTAAVDEVPE) form a disordered region. Polar residues predominate over residues 876–897 (STGSAPAQEHPLSNDSSISEQT). Residues 937-1146 (DLEKSLAEMS…IQHVYETLLS (210 aa)) adopt a coiled-coil conformation. S946 bears the Phosphoserine; by GSK3-beta mark.

As to quaternary structure, homodimer, with a globular head domain and a long stalk. Homooligomer; the globular head domains associate, resulting in aster-like structures. Binds to microtubules in the mitotic spindle. Interacts with DCLRE1B/Apollo. Part of an astrin (SPAG5)-kinastrin (SKAP) complex containing KNSTRN, SPAG5, PLK1, DYNLL1 and SGO2A. Interacts with KNSTRN. Interacts with RPTOR; this interaction competes with RPTOR binding to MTOR, resulting in decreased mTORC1 formation. Interacts with G3BP1. The complex formed with G3BP1 and RPTOR is increased by oxidative stress. Interacts with OSBPL8, PCM1 and CDK5RAP2. Interacts (via C-terminus) with NUMA1 (via C-terminus); this interaction promotes the recruitment of SPAG5 to the microtubules at spindle poles in a dynein-dynactin-dependent manner. Interacts with DYNLL1. Post-translationally, phosphorylated by AURKA. In terms of tissue distribution, detected in testis, but not in the other tissues tested.

The protein resides in the cytoplasm. Its subcellular location is the cytoskeleton. It localises to the spindle. It is found in the spindle pole. The protein localises to the chromosome. The protein resides in the centromere. Its subcellular location is the kinetochore. It localises to the midbody. It is found in the microtubule organizing center. The protein localises to the centrosome. The protein resides in the centriolar satellite. In terms of biological role, essential component of the mitotic spindle required for normal chromosome segregation and progression into anaphase. Required for chromosome alignment, normal timing of sister chromatid segregation, and maintenance of spindle pole architecture. In complex with SKAP, promotes stable microtubule-kinetochore attachments. May contribute to the regulation of separase activity. May regulate AURKA localization to mitotic spindle, but not to centrosomes and CCNB1 localization to both mitotic spindle and centrosomes. Involved in centriole duplication. Required for CDK5RAP22, CEP152, WDR62 and CEP63 centrosomal localization and promotes the centrosomal localization of CDK2. In non-mitotic cells, upon stress induction, inhibits mammalian target of rapamycin complex 1 (mTORC1) association and recruits the mTORC1 component RPTOR to stress granules (SGs), thereby preventing mTORC1 hyperactivation-induced apoptosis. May enhance GSK3B-mediated phosphorylation of other substrates, such as MAPT/TAU. This is Sperm-associated antigen 5 (Spag5) from Mus musculus (Mouse).